A 284-amino-acid polypeptide reads, in one-letter code: Polyamine aminopropyltransferase (284 aa).

A PABS domain is found at 2–237 (ELWYTEKHTE…GHWLFGFASK (236 aa)). Gln-31 provides a ligand contact to S-methyl-5'-thioadenosine. Positions 62 and 86 each coordinate spermidine. S-methyl-5'-thioadenosine-binding positions include Glu-106 and 137–138 (DG). The Proton acceptor role is filled by Asp-155. 155–158 (DSTD) serves as a coordination point for spermidine. S-methyl-5'-thioadenosine is bound at residue Pro-162.

Belongs to the spermidine/spermine synthase family. In terms of assembly, homodimer or homotetramer.

It is found in the cytoplasm. The enzyme catalyses S-adenosyl 3-(methylsulfanyl)propylamine + putrescine = S-methyl-5'-thioadenosine + spermidine + H(+). The protein operates within amine and polyamine biosynthesis; spermidine biosynthesis; spermidine from putrescine: step 1/1. Functionally, catalyzes the irreversible transfer of a propylamine group from the amino donor S-adenosylmethioninamine (decarboxy-AdoMet) to putrescine (1,4-diaminobutane) to yield spermidine. In Clostridium botulinum (strain Eklund 17B / Type B), this protein is Polyamine aminopropyltransferase.